The sequence spans 612 residues: PAN2-PAN3 deadenylation complex subunit PAN3 (612 aa).

Residues 10–39 (WAKDTPCKNITIYGYCKYENDGCIFNHGKP) form a C3H1-type zinc finger. A compositionally biased stretch (low complexity) spans 44–62 (SNTGGAAAGSAEDSAASGG). Residues 44–64 (SNTGGAAAGSAEDSAASGGVT) form a disordered region. 2 short sequence motifs (PABPC-interacting motif-2 (PAM-2)) span residues 84 to 104 (SVAIPDFNNIPSFTPERIVSS) and 111 to 131 (TAFTPSFNPYGSDSFNPSANV). The segment at 231 to 481 (QVFPSDGNLP…TIAEFTALFS (251 aa)) is pseudokinase domain. Residues R286, 336–343 (DYYPQSNS), and 389–390 (DK) contribute to the ATP site. The stretch at 482 to 520 (HKMLDIISSSQTYSEYIEQHLSRELENGRLFRLMCKLNF) forms a coiled coil. Residues 521–612 (IFGRMESSMD…IDSTFRSMTQ (92 aa)) form a knob domain region.

It belongs to the protein kinase superfamily. PAN3 family. As to quaternary structure, homodimer. Forms a heterotrimer with a catalytic subunit PAN2 to form the poly(A)-nuclease (PAN) deadenylation complex. Interacts (via PAM-2 motif) with poly(A)-binding protein PAB1 (via PABC domain), conferring substrate specificity of the enzyme complex.

It is found in the cytoplasm. Regulatory subunit of the poly(A)-nuclease (PAN) deadenylation complex, one of two cytoplasmic mRNA deadenylases involved in mRNA turnover. PAN specifically shortens poly(A) tails of RNA and the activity is stimulated by poly(A)-binding protein PAB1. PAN deadenylation is followed by rapid degradation of the shortened mRNA tails by the CCR4-NOT complex. Deadenylated mRNAs are then degraded by two alternative mechanisms, namely exosome-mediated 3'-5' exonucleolytic degradation, or deadenylation-dependent mRNA decaping and subsequent 5'-3' exonucleolytic degradation by XRN1. May also be involved in post-transcriptional maturation of mRNA poly(A) tails. PAN3 acts as a positive regulator for PAN activity, recruiting the catalytic subunit PAN2 to mRNA via its interaction with RNA and with PAB1. The sequence is that of PAN2-PAN3 deadenylation complex subunit PAN3 from Eremothecium gossypii (strain ATCC 10895 / CBS 109.51 / FGSC 9923 / NRRL Y-1056) (Yeast).